The primary structure comprises 208 residues: Riboflavin synthase (208 aa).

2 Lumazine-binding repeats span residues 1-97 (MFTG…MGGH) and 98-195 (IISG…VDTT). Residues 4–6 (GIV), 48–50 (CLT), 62–67 (DIMKIT), 101–103 (GHI), Lys-137, 146–148 (SLT), and 160–165 (SIIPET) each bind 2,4-dihydroxypteridine.

Homotrimer.

It carries out the reaction 2 6,7-dimethyl-8-(1-D-ribityl)lumazine + H(+) = 5-amino-6-(D-ribitylamino)uracil + riboflavin. It participates in cofactor biosynthesis; riboflavin biosynthesis; riboflavin from 2-hydroxy-3-oxobutyl phosphate and 5-amino-6-(D-ribitylamino)uracil: step 2/2. Functionally, catalyzes the dismutation of two molecules of 6,7-dimethyl-8-ribityllumazine, resulting in the formation of riboflavin and 5-amino-6-(D-ribitylamino)uracil. The sequence is that of Riboflavin synthase (ribE) from Buchnera aphidicola subsp. Schizaphis graminum (strain Sg).